A 183-amino-acid chain; its full sequence is Adenine phosphoribosyltransferase (183 aa).

This sequence belongs to the purine/pyrimidine phosphoribosyltransferase family. As to quaternary structure, homodimer.

The protein resides in the cytoplasm. It catalyses the reaction AMP + diphosphate = 5-phospho-alpha-D-ribose 1-diphosphate + adenine. The protein operates within purine metabolism; AMP biosynthesis via salvage pathway; AMP from adenine: step 1/1. In terms of biological role, catalyzes a salvage reaction resulting in the formation of AMP, that is energically less costly than de novo synthesis. This chain is Adenine phosphoribosyltransferase, found in Citrobacter koseri (strain ATCC BAA-895 / CDC 4225-83 / SGSC4696).